The sequence spans 183 residues: Capsid protein (183 aa).

A disordered region spans residues 136-183; it reads NAPILSTLPETTVVRRRGRSPRRRTPSPRRRRSQSPRRRRSQSRESQC. The segment covering 149 to 176 has biased composition (basic residues); the sequence is VRRRGRSPRRRTPSPRRRRSQSPRRRRS. A phosphoserine; by host mark is found at serine 155, serine 162, and serine 170. One copy of the 1; half-length repeat lies at 155-161; it reads SPRRRTP. Residues 155 to 177 form a 3 X 8 AA repeats of S-P-R-R-R-[PR]-S-Q region; the sequence is SPRRRTPSPRRRRSQSPRRRRSQ. A Bipartite nuclear localization signal motif is present at residues 158–175; that stretch reads RRTPSPRRRRSQSPRRRR. 2 repeat units span residues 162 to 169 and 170 to 177. The RNA binding stretch occupies residues 177 to 183; the sequence is QSRESQC.

It belongs to the orthohepadnavirus core antigen family. As to quaternary structure, homodimerizes, then multimerizes. Interacts with cytosol exposed regions of viral L glycoprotein present in the reticulum-to-Golgi compartment. Interacts with human FLNB. Phosphorylated form interacts with host importin alpha; this interaction depends on the exposure of the NLS, which itself depends upon genome maturation and/or phosphorylation of the capsid protein. Interacts with host NUP153. Post-translationally, phosphorylated by host SRPK1, SRPK2, and maybe protein kinase C or GAPDH. Phosphorylation is critical for pregenomic RNA packaging. Protein kinase C phosphorylation is stimulated by HBx protein and may play a role in transport of the viral genome to the nucleus at the late step during the viral replication cycle.

Its subcellular location is the virion. It localises to the host cytoplasm. Functionally, self assembles to form an icosahedral capsid. Most capsids appear to be large particles with an icosahedral symmetry of T=4 and consist of 240 copies of capsid protein, though a fraction forms smaller T=3 particles consisting of 180 capsid proteins. Entering capsids are transported along microtubules to the nucleus. Phosphorylation of the capsid is thought to induce exposure of nuclear localization signal in the C-terminal portion of the capsid protein that allows binding to the nuclear pore complex via the importin (karyopherin-) alpha and beta. Capsids are imported in intact form through the nuclear pore into the nuclear basket, where it probably binds NUP153. Only capsids that contain the mature viral genome can release the viral DNA and capsid protein into the nucleoplasm. Immature capsids get stuck in the basket. Capsids encapsulate the pre-genomic RNA and the P protein. Pre-genomic RNA is reverse-transcribed into DNA while the capsid is still in the cytoplasm. The capsid can then either be directed to the nucleus, providing more genomes for transcription, or bud through the endoplasmic reticulum to provide new virions. This Homo sapiens (Human) protein is Capsid protein.